A 295-amino-acid chain; its full sequence is Sulfotransferase 1A2 (295 aa).

A 3'-phosphoadenylyl sulfate-binding site is contributed by 48–53 (KSGTTW). 106 to 108 (KTH) contacts substrate. The active-site Proton acceptor is the H108. Residues R130, S138, Y193, 227 to 232 (TSFKEM), and 255 to 259 (FMRKG) contribute to the 3'-phosphoadenylyl sulfate site.

Belongs to the sulfotransferase 1 family. Homodimer.

It localises to the cytoplasm. The enzyme catalyses a phenol + 3'-phosphoadenylyl sulfate = an aryl sulfate + adenosine 3',5'-bisphosphate + H(+). Sulfotransferase that utilizes 3'-phospho-5'-adenylyl sulfate (PAPS) as sulfonate donor to catalyze the sulfate conjugation of catecholamines, phenolic drugs and neurotransmitters. Is also responsible for the sulfonation and activation of minoxidil. Mediates the metabolic activation of carcinogenic N-hydroxyarylamines to DNA binding products and could so participate as modulating factor of cancer risk. The sequence is that of Sulfotransferase 1A2 (SULT1A2) from Homo sapiens (Human).